The chain runs to 508 residues: Photosystem II CP47 reaction center protein (508 aa).

The next 6 helical transmembrane spans lie at A21–S36, I101–W115, G140–F156, I203–S218, V237–V252, and T457–R472.

Belongs to the PsbB/PsbC family. PsbB subfamily. PSII is composed of 1 copy each of membrane proteins PsbA, PsbB, PsbC, PsbD, PsbE, PsbF, PsbH, PsbI, PsbJ, PsbK, PsbL, PsbM, PsbT, PsbX, PsbY, PsbZ, Psb30/Ycf12, at least 3 peripheral proteins of the oxygen-evolving complex and a large number of cofactors. It forms dimeric complexes. It depends on Binds multiple chlorophylls. PSII binds additional chlorophylls, carotenoids and specific lipids. as a cofactor.

It localises to the plastid. The protein localises to the chloroplast thylakoid membrane. In terms of biological role, one of the components of the core complex of photosystem II (PSII). It binds chlorophyll and helps catalyze the primary light-induced photochemical processes of PSII. PSII is a light-driven water:plastoquinone oxidoreductase, using light energy to abstract electrons from H(2)O, generating O(2) and a proton gradient subsequently used for ATP formation. The chain is Photosystem II CP47 reaction center protein from Lolium perenne (Perennial ryegrass).